The following is a 132-amino-acid chain: Putative esterase Ta0293 (132 aa).

The protein belongs to the thioesterase PaaI family.

The sequence is that of Putative esterase Ta0293 from Thermoplasma acidophilum (strain ATCC 25905 / DSM 1728 / JCM 9062 / NBRC 15155 / AMRC-C165).